The chain runs to 383 residues: BRISC and BRCA1-A complex member 2 (383 aa).

Met1 is modified (N-acetylmethionine). Ser2 is modified (phosphoserine). UEV-like stretches follow at residues 30–147 and 275–364; these read DATN…TLLE and IAAF…RAKA.

It belongs to the BABAM2 family. Component of the ARISC complex, at least composed of UIMC1/RAP80, ABRAXAS1, BRCC3/BRCC36, BABAM2 and BABAM1/NBA1. Component of the BRCA1-A complex, at least composed of BRCA1, BARD1, UIMC1/RAP80, ABRAXAS1, BRCC3/BRCC36, BABAM2 and BABAM1/NBA1. In the BRCA1-A complex, interacts directly with ABRAXAS1, BRCC3/BRCC36 and BABAM1/NBA1. Binds polyubiquitin. Component of the BRISC complex, at least composed of ABRAXAS2, BRCC3/BRCC36, BABAM2 and BABAM1/NBA1. Identified in a complex with SHMT2 and the other subunits of the BRISC complex. Component of the BRCA1/BRCA2 containing complex (BRCC), which also contains BRCA1, BRCA2, BARD1, BRCC3/BRCC36 and RAD51. BRCC is a ubiquitin E3 ligase complex that enhances cellular survival following DNA damage. May interact with FAS and TNFRSF1A. As to expression, expressed in all cell lines examined. Highly expressed in placenta.

It localises to the cytoplasm. It is found in the nucleus. In terms of biological role, component of the BRCA1-A complex, a complex that specifically recognizes 'Lys-63'-linked ubiquitinated histones H2A and H2AX at DNA lesions sites, leading to target the BRCA1-BARD1 heterodimer to sites of DNA damage at double-strand breaks (DSBs). The BRCA1-A complex also possesses deubiquitinase activity that specifically removes 'Lys-63'-linked ubiquitin on histones H2A and H2AX. In the BRCA1-A complex, it acts as an adapter that bridges the interaction between BABAM1/NBA1 and the rest of the complex, thereby being required for the complex integrity and modulating the E3 ubiquitin ligase activity of the BRCA1-BARD1 heterodimer. Component of the BRISC complex, a multiprotein complex that specifically cleaves 'Lys-63'-linked ubiquitin in various substrates. Within the BRISC complex, acts as an adapter that bridges the interaction between BABAM1/NBA1 and the rest of the complex, thereby being required for the complex integrity. The BRISC complex is required for normal mitotic spindle assembly and microtubule attachment to kinetochores via its role in deubiquitinating NUMA1. The BRISC complex plays a role in interferon signaling via its role in the deubiquitination of the interferon receptor IFNAR1; deubiquitination increases IFNAR1 activity by enhancing its stability and cell surface expression. Down-regulates the response to bacterial lipopolysaccharide (LPS) via its role in IFNAR1 deubiquitination. May play a role in homeostasis or cellular differentiation in cells of neural, epithelial and germline origins. May also act as a death receptor-associated anti-apoptotic protein, which inhibits the mitochondrial apoptotic pathway. May regulate TNF-alpha signaling through its interactions with TNFRSF1A; however these effects may be indirect. This Homo sapiens (Human) protein is BRISC and BRCA1-A complex member 2.